The sequence spans 589 residues: L-fucose isomerase (589 aa).

Catalysis depends on proton acceptor residues E340 and D364. 3 residues coordinate Mn(2+): E340, D364, and H527.

It belongs to the L-fucose isomerase family. Mn(2+) is required as a cofactor.

It is found in the cytoplasm. The catalysed reaction is L-fucose = L-fuculose. It participates in carbohydrate degradation; L-fucose degradation; L-lactaldehyde and glycerone phosphate from L-fucose: step 1/3. Its function is as follows. Converts the aldose L-fucose into the corresponding ketose L-fuculose. This chain is L-fucose isomerase, found in Haemophilus influenzae (strain PittEE).